The primary structure comprises 809 residues: Trimethylamine-N-oxide reductase 2 (809 aa).

Positions M1–A31 form a signal peptide, tat-type signal. S176 lines the Mo-bis(molybdopterin guanine dinucleotide) pocket.

This sequence belongs to the prokaryotic molybdopterin-containing oxidoreductase family. It depends on Mo-bis(molybdopterin guanine dinucleotide) as a cofactor. Post-translationally, predicted to be exported by the Tat system. The position of the signal peptide cleavage has not been experimentally proven.

The protein localises to the periplasm. It catalyses the reaction trimethylamine + 2 Fe(III)-[cytochrome c] + H2O = trimethylamine N-oxide + 2 Fe(II)-[cytochrome c] + 3 H(+). Its function is as follows. Reduces trimethylamine-N-oxide (TMAO) into trimethylamine; an anaerobic reaction coupled to energy-yielding reactions. Can also reduce other N- and S-oxide compounds such as 4-methylmorpholine-N-oxide and biotin sulfoxide (BSO), but with a lower catalytic efficiency. This chain is Trimethylamine-N-oxide reductase 2 (torZ), found in Escherichia coli O6:H1 (strain CFT073 / ATCC 700928 / UPEC).